The chain runs to 282 residues: 2,3,4,5-tetrahydropyridine-2,6-dicarboxylate N-succinyltransferase (282 aa).

Substrate contacts are provided by Arg109 and Asp146.

Belongs to the transferase hexapeptide repeat family. As to quaternary structure, homotrimer.

It localises to the cytoplasm. It catalyses the reaction (S)-2,3,4,5-tetrahydrodipicolinate + succinyl-CoA + H2O = (S)-2-succinylamino-6-oxoheptanedioate + CoA. It functions in the pathway amino-acid biosynthesis; L-lysine biosynthesis via DAP pathway; LL-2,6-diaminopimelate from (S)-tetrahydrodipicolinate (succinylase route): step 1/3. This Bartonella quintana (strain Toulouse) (Rochalimaea quintana) protein is 2,3,4,5-tetrahydropyridine-2,6-dicarboxylate N-succinyltransferase.